Consider the following 365-residue polypeptide: tRNA N6-adenosine threonylcarbamoyltransferase (365 aa).

2 residues coordinate Fe cation: His-119 and His-123. Substrate is bound by residues 141–145, Asp-174, Gly-187, and Asn-288; that span reads LVSGG. Asp-316 contributes to the Fe cation binding site.

This sequence belongs to the KAE1 / TsaD family. It depends on Fe(2+) as a cofactor.

The protein resides in the cytoplasm. It carries out the reaction L-threonylcarbamoyladenylate + adenosine(37) in tRNA = N(6)-L-threonylcarbamoyladenosine(37) in tRNA + AMP + H(+). In terms of biological role, required for the formation of a threonylcarbamoyl group on adenosine at position 37 (t(6)A37) in tRNAs that read codons beginning with adenine. Is involved in the transfer of the threonylcarbamoyl moiety of threonylcarbamoyl-AMP (TC-AMP) to the N6 group of A37, together with TsaE and TsaB. TsaD likely plays a direct catalytic role in this reaction. The sequence is that of tRNA N6-adenosine threonylcarbamoyltransferase from Rhizobium etli (strain ATCC 51251 / DSM 11541 / JCM 21823 / NBRC 15573 / CFN 42).